The primary structure comprises 328 residues: Methionyl-tRNA formyltransferase (328 aa).

121-124 provides a ligand contact to (6S)-5,6,7,8-tetrahydrofolate; the sequence is SLLP.

Belongs to the Fmt family.

It carries out the reaction L-methionyl-tRNA(fMet) + (6R)-10-formyltetrahydrofolate = N-formyl-L-methionyl-tRNA(fMet) + (6S)-5,6,7,8-tetrahydrofolate + H(+). Its function is as follows. Attaches a formyl group to the free amino group of methionyl-tRNA(fMet). The formyl group appears to play a dual role in the initiator identity of N-formylmethionyl-tRNA by promoting its recognition by IF2 and preventing the misappropriation of this tRNA by the elongation apparatus. The protein is Methionyl-tRNA formyltransferase of Paraburkholderia xenovorans (strain LB400).